We begin with the raw amino-acid sequence, 356 residues long: DNA polymerase IV (356 aa).

The region spanning 4 to 185 (IIHIDMDCYY…LALGKIPGVG (182 aa)) is the UmuC domain. Residues Asp8 and Asp103 each contribute to the Mg(2+) site. The active site involves Glu104.

It belongs to the DNA polymerase type-Y family. Monomer. Mg(2+) serves as cofactor.

Its subcellular location is the cytoplasm. The enzyme catalyses DNA(n) + a 2'-deoxyribonucleoside 5'-triphosphate = DNA(n+1) + diphosphate. Poorly processive, error-prone DNA polymerase involved in untargeted mutagenesis. Copies undamaged DNA at stalled replication forks, which arise in vivo from mismatched or misaligned primer ends. These misaligned primers can be extended by PolIV. Exhibits no 3'-5' exonuclease (proofreading) activity. May be involved in translesional synthesis, in conjunction with the beta clamp from PolIII. The chain is DNA polymerase IV from Pseudoalteromonas atlantica (strain T6c / ATCC BAA-1087).